Reading from the N-terminus, the 432-residue chain is Adenylosuccinate synthetase (432 aa).

GTP is bound by residues 13 to 19 and 41 to 43; these read GDEGKGK and GHT. Asp14 serves as the catalytic Proton acceptor. 2 residues coordinate Mg(2+): Asp14 and Gly41. IMP contacts are provided by residues 14 to 17, 39 to 42, Thr130, Arg144, Gln225, Thr240, and Arg304; these read DEGK and NAGH. Residue His42 is the Proton donor of the active site. Substrate is bound at residue 300–306; that stretch reads ATTGRRR. GTP contacts are provided by residues Arg306, 332–334, and 415–417; these read KLD and STG.

The protein belongs to the adenylosuccinate synthetase family. In terms of assembly, homodimer. It depends on Mg(2+) as a cofactor.

It localises to the cytoplasm. It catalyses the reaction IMP + L-aspartate + GTP = N(6)-(1,2-dicarboxyethyl)-AMP + GDP + phosphate + 2 H(+). The protein operates within purine metabolism; AMP biosynthesis via de novo pathway; AMP from IMP: step 1/2. Plays an important role in the de novo pathway of purine nucleotide biosynthesis. Catalyzes the first committed step in the biosynthesis of AMP from IMP. The sequence is that of Adenylosuccinate synthetase from Salmonella typhi.